Consider the following 185-residue polypeptide: Prenylated Rab acceptor protein 1 (185 aa).

Residues 1-78 (MAAEKDQQKD…RNVEYYQSNY (78 aa)) are Cytoplasmic-facing. Residues 30 to 54 (AGRERLERRRATIRPWSSFVDQRRF) are required for interaction with prenylated RAB3A and VAMP2. The next 2 helical transmembrane spans lie at 79–94 (VFVF…VTSP) and 95–112 (MLLV…ILYL). Over 113-131 (RTLQSKFVLFGREVSPAHQ) the chain is Cytoplasmic. Transmembrane regions (helical) follow at residues 132-148 (YALA…LAGA) and 149-165 (GSAV…VIGS). Positions 165-185 (SHAAFHQMEAVDGEELQMEPV) are required for interaction with GDI1. The Cytoplasmic segment spans residues 166–185 (HAAFHQMEAVDGEELQMEPV). Residues 175–185 (VDGEELQMEPV) form a required for interaction with prenylated RAB3A and VAMP2 region. The homodimerization stretch occupies residues 175-185 (VDGEELQMEPV).

It belongs to the PRA1 family. In terms of assembly, homodimer. Interacts with VAMP2 (synaptobrevin-2), prenylated Rab proteins, GDI1, NDRG1 and PCLO.

It is found in the cell membrane. It localises to the cytoplasm. The protein resides in the golgi apparatus. The protein localises to the cytoplasmic vesicle. Its subcellular location is the secretory vesicle. It is found in the synaptic vesicle. Functionally, general Rab protein regulator required for vesicle formation from the Golgi complex. May control vesicle docking and fusion by mediating the action of Rab GTPases to the SNARE complexes. In addition it inhibits the removal of Rab GTPases from the membrane by GDI1. The chain is Prenylated Rab acceptor protein 1 (RABAC1) from Canis lupus familiaris (Dog).